Here is a 525-residue protein sequence, read N- to C-terminus: Probable CoA ligase CCL9 (525 aa).

ATP is bound by residues 171 to 179, 311 to 316, Asp395, 407 to 410, and Lys501; these read TSGTTSRPK, EAYAMT, and LVGR. Positions 242–311 are SBD1; the sequence is SASTFWSDMI…EESFGAPVLE (70 aa). Residues 312–375 form an SBD2 region; that stretch reads AYAMTEAAHL…IRGPNVTKGY (64 aa).

It belongs to the ATP-dependent AMP-binding enzyme family.

It localises to the cytoplasm. Its subcellular location is the cytosol. In Humulus lupulus (European hop), this protein is Probable CoA ligase CCL9.